Consider the following 478-residue polypeptide: Zinc finger and SCAN domain-containing protein 26 (478 aa).

Residue Lys17 forms a Glycyl lysine isopeptide (Lys-Gly) (interchain with G-Cter in SUMO2) linkage. One can recognise an SCAN box domain in the interval Cys51–Leu133. Disordered regions lie at residues Gly159–Glu181 and Glu200–Lys226. Composition is skewed to basic and acidic residues over residues Gln164–Glu181 and Glu207–Lys226. A C2H2-type 1; degenerate zinc finger spans residues Tyr231–His253. C2H2-type zinc fingers lie at residues His282–His304, Tyr310–His332, Tyr338–His360, Cys366–His388, His394–His416, Phe422–His444, and Tyr450–His472.

It localises to the nucleus. May be involved in transcriptional regulation. The sequence is that of Zinc finger and SCAN domain-containing protein 26 (ZSCAN26) from Homo sapiens (Human).